The primary structure comprises 98 residues: C-C motif chemokine 19 (98 aa).

The signal sequence occupies residues Met1 to Ser21. Disulfide bonds link Cys29-Cys55 and Cys30-Cys71.

Belongs to the intercrine beta (chemokine CC) family. Interacts with TNFAIP6 (via Link domain). In terms of tissue distribution, expressed at high levels in the lymph nodes, thymus and appendix. Intermediate levels seen in colon and trachea, while low levels found in spleen, small intestine, lung, kidney and stomach.

It is found in the secreted. May play a role not only in inflammatory and immunological responses but also in normal lymphocyte recirculation and homing. May play an important role in trafficking of T-cells in thymus, and T-cell and B-cell migration to secondary lymphoid organs. Binds to chemokine receptor CCR7. Recombinant CCL19 shows potent chemotactic activity for T-cells and B-cells but not for granulocytes and monocytes. Binds to atypical chemokine receptor ACKR4 and mediates the recruitment of beta-arrestin (ARRB1/2) to ACKR4. This Homo sapiens (Human) protein is C-C motif chemokine 19 (CCL19).